A 214-amino-acid polypeptide reads, in one-letter code: Cytochrome b (214 aa).

Helical transmembrane passes span 31–51 (FGSM…FLAF), 75–96 (WIMQ…YIHI), 111–131 (WVSG…GYVL), and 176–196 (FFAL…IHIL). Residues His81 and His95 each coordinate heme b. Heme b-binding residues include His180 and His194. His199 provides a ligand contact to a ubiquinone.

Belongs to the cytochrome b family. In terms of assembly, the cytochrome bc1 complex contains 3 respiratory subunits (MT-CYB, CYC1 and UQCRFS1), 2 core proteins (UQCRC1 and UQCRC2) and probably 6 low-molecular weight proteins. Heme b serves as cofactor.

It is found in the mitochondrion inner membrane. Its function is as follows. Component of the ubiquinol-cytochrome c reductase complex (complex III or cytochrome b-c1 complex) that is part of the mitochondrial respiratory chain. The b-c1 complex mediates electron transfer from ubiquinol to cytochrome c. Contributes to the generation of a proton gradient across the mitochondrial membrane that is then used for ATP synthesis. The protein is Cytochrome b (MT-CYB) of Gloydius blomhoffii (Mamushi).